The chain runs to 319 residues: Acetyl-coenzyme A carboxylase carboxyl transferase subunit alpha (319 aa).

A CoA carboxyltransferase C-terminal domain is found at 39 to 293 (KLEKKVDRMR…HEAIARQLKE (255 aa)).

The protein belongs to the AccA family. As to quaternary structure, acetyl-CoA carboxylase is a heterohexamer composed of biotin carboxyl carrier protein (AccB), biotin carboxylase (AccC) and two subunits each of ACCase subunit alpha (AccA) and ACCase subunit beta (AccD).

The protein localises to the cytoplasm. It carries out the reaction N(6)-carboxybiotinyl-L-lysyl-[protein] + acetyl-CoA = N(6)-biotinyl-L-lysyl-[protein] + malonyl-CoA. It participates in lipid metabolism; malonyl-CoA biosynthesis; malonyl-CoA from acetyl-CoA: step 1/1. In terms of biological role, component of the acetyl coenzyme A carboxylase (ACC) complex. First, biotin carboxylase catalyzes the carboxylation of biotin on its carrier protein (BCCP) and then the CO(2) group is transferred by the carboxyltransferase to acetyl-CoA to form malonyl-CoA. In Geobacter sulfurreducens (strain ATCC 51573 / DSM 12127 / PCA), this protein is Acetyl-coenzyme A carboxylase carboxyl transferase subunit alpha.